The sequence spans 234 residues: uncharacterized protein (234 aa).

The region spanning 103–211 (LAKKVPFVVC…SHIKIGKSFL (109 aa)) is the tRNA-binding domain.

This is an uncharacterized protein from Mycoplasma pneumoniae (strain ATCC 29342 / M129 / Subtype 1) (Mycoplasmoides pneumoniae).